Reading from the N-terminus, the 212-residue chain is Fibrillarin-like rRNA/tRNA 2'-O-methyltransferase (212 aa).

Residues 76-77 (TT), 94-95 (EL), 119-120 (DA), and 139-142 (DIAQ) each bind S-adenosyl-L-methionine.

This sequence belongs to the methyltransferase superfamily. Fibrillarin family. Interacts with nop5. Component of box C/D small ribonucleoprotein (sRNP) particles that contain rpl7ae, FlpA and nop5, plus a guide RNA.

In terms of biological role, involved in pre-rRNA and tRNA processing. Utilizes the methyl donor S-adenosyl-L-methionine to catalyze the site-specific 2'-hydroxyl methylation of ribose moieties in rRNA and tRNA. Site specificity is provided by a guide RNA that base pairs with the substrate. Methylation occurs at a characteristic distance from the sequence involved in base pairing with the guide RNA. The chain is Fibrillarin-like rRNA/tRNA 2'-O-methyltransferase from Picrophilus torridus (strain ATCC 700027 / DSM 9790 / JCM 10055 / NBRC 100828 / KAW 2/3).